Reading from the N-terminus, the 289-residue chain is Serine/threonine-protein phosphatase PGAM5, mitochondrial (289 aa).

The Mitochondrial matrix portion of the chain corresponds to 1–6 (MAFRQA). The chain crosses the membrane as a helical span at residues 7–29 (LQLAACGLAGGSAAVLFSAVAVG). Over 30–289 (KPRAGGDAEP…FMPPDKITRS (260 aa)) the chain is Mitochondrial intermembrane. Residues 32–59 (RAGGDAEPRPAEPPAWAGGARPGPGVWD) form a disordered region. A compositionally biased stretch (low complexity) spans 45–56 (PAWAGGARPGPG). The tract at residues 77–82 (NVESGE) is interaction with KEAP1. Residues S80 and S87 each carry the phosphoserine modification. An N6-acetyllysine mark is found at K116, K144, and K191.

Belongs to the phosphoglycerate mutase family. BPG-dependent PGAM subfamily. As to quaternary structure, dimer. Forms a ternary complex with NFE2L2 and KEAP1. Interacts with BCL2L1 and MAP3K5. Upon TNF-induced necrosis, forms in complex with RIPK1, RIPK3 and MLKL; the formation of this complex leads to PGAM5 phosphorylation. Isoform 2, but not isoform 1, interacts with DNM1L; this interaction leads to DNM1L dephosphorylation and activation and eventually to mitochondria fragmentation. In terms of processing, both isoform 1 and isoform 2 are phosphorylated by the RIPK1/RIPK3 complex under necrotic conditions. This phosphorylation increases PGAM5 phosphatase activity. Post-translationally, proteolytically cleaved by PARL in response to loss of mitochondrial membrane potential.

The protein localises to the mitochondrion outer membrane. It is found in the mitochondrion inner membrane. It catalyses the reaction O-phospho-L-seryl-[protein] + H2O = L-seryl-[protein] + phosphate. The enzyme catalyses O-phospho-L-threonyl-[protein] + H2O = L-threonyl-[protein] + phosphate. In terms of biological role, mitochondrial serine/threonine phosphatase that dephosphorylates various substrates and thus plays a role in different biological processes including cellular senescence or mitophagy. Modulates cellular senescence by regulating mitochondrial dynamics. Mechanistically, participates in mitochondrial fission through dephosphorylating DNM1L/DRP1. Additionally, dephosphorylates MFN2 in a stress-sensitive manner and consequently protects it from ubiquitination and degradation to promote mitochondrial network formation. Regulates mitophagy independent of PARKIN by interacting with and dephosphorylating FUNDC1, which interacts with LC3. Regulates anti-oxidative response by forming a tertiary complex with KEAP1 and NRF2. Regulates necroptosis by acting as a RIPK3 target and recruiting the RIPK1-RIPK3-MLKL necrosis 'attack' complex to mitochondria. This Homo sapiens (Human) protein is Serine/threonine-protein phosphatase PGAM5, mitochondrial (PGAM5).